Consider the following 270-residue polypeptide: 4-hydroxy-tetrahydrodipicolinate reductase (270 aa).

Residues 9–14 (GAGGRM) and E35 contribute to the NAD(+) site. R36 serves as a coordination point for NADP(+). Residues 99–101 (GTT) and 123–126 (ASNY) contribute to the NAD(+) site. The Proton donor/acceptor role is filled by H156. H157 contacts (S)-2,3,4,5-tetrahydrodipicolinate. Residue K160 is the Proton donor of the active site. 166-167 (GT) lines the (S)-2,3,4,5-tetrahydrodipicolinate pocket.

This sequence belongs to the DapB family.

It is found in the cytoplasm. The catalysed reaction is (S)-2,3,4,5-tetrahydrodipicolinate + NAD(+) + H2O = (2S,4S)-4-hydroxy-2,3,4,5-tetrahydrodipicolinate + NADH + H(+). It catalyses the reaction (S)-2,3,4,5-tetrahydrodipicolinate + NADP(+) + H2O = (2S,4S)-4-hydroxy-2,3,4,5-tetrahydrodipicolinate + NADPH + H(+). The protein operates within amino-acid biosynthesis; L-lysine biosynthesis via DAP pathway; (S)-tetrahydrodipicolinate from L-aspartate: step 4/4. Catalyzes the conversion of 4-hydroxy-tetrahydrodipicolinate (HTPA) to tetrahydrodipicolinate. The chain is 4-hydroxy-tetrahydrodipicolinate reductase from Mannheimia succiniciproducens (strain KCTC 0769BP / MBEL55E).